A 225-amino-acid polypeptide reads, in one-letter code: MRIVFDIGGSVLVPDDPDIDFIKAIAYELTKISEDHEVAVVVGGGKVARKYIKAAKTFTPNETFKDYIGIHITRANAMLLIAALGEKAYPFVVQDFRKAWEVIQLKKIPIMGGTHPGHTTDAVAALLAEYLQADLLIVVTNVDGVYDSDPRKNPNAKKLDRITVDQLVDIAMEGESKAGGSGVVDALAAKFIQRGKIRTYIVGKKDAYSLFDVIKGKHSGTVVEP.

Position 9 to 10 (9 to 10) interacts with ATP; it reads GS. Residue G44 participates in UMP binding. ATP is bound by residues G45 and R49. Residues D66 and 114-120 contribute to the UMP site; that span reads THPGHTT. ATP is bound by residues T140, N141, Y146, and D149.

Belongs to the UMP kinase family. As to quaternary structure, homohexamer.

It localises to the cytoplasm. It catalyses the reaction UMP + ATP = UDP + ADP. It participates in pyrimidine metabolism; CTP biosynthesis via de novo pathway; UDP from UMP (UMPK route): step 1/1. With respect to regulation, inhibited by UTP. In terms of biological role, catalyzes the reversible phosphorylation of UMP to UDP. The sequence is that of Uridylate kinase from Thermococcus onnurineus (strain NA1).